The primary structure comprises 310 residues: Ribosomal RNA small subunit methyltransferase H (310 aa).

S-adenosyl-L-methionine-binding positions include 33–35 (AGH), D53, F79, D100, and Q107.

It belongs to the methyltransferase superfamily. RsmH family.

It is found in the cytoplasm. It catalyses the reaction cytidine(1402) in 16S rRNA + S-adenosyl-L-methionine = N(4)-methylcytidine(1402) in 16S rRNA + S-adenosyl-L-homocysteine + H(+). Its function is as follows. Specifically methylates the N4 position of cytidine in position 1402 (C1402) of 16S rRNA. This is Ribosomal RNA small subunit methyltransferase H from Desulfitobacterium hafniense (strain DSM 10664 / DCB-2).